The chain runs to 359 residues: UPF0283 membrane protein RHECIAT_CH0002430 (359 aa).

The disordered stretch occupies residues 1–50 (MSKPPSDPPRRPPAAFAYEDEASEPRNSGRQQQGRRKPESFSENIVVTPD). Transmembrane regions (helical) follow at residues 77–97 (FGKI…GLWT) and 111–131 (LGYA…ALVI).

Belongs to the UPF0283 family.

It is found in the cell inner membrane. The chain is UPF0283 membrane protein RHECIAT_CH0002430 from Rhizobium etli (strain CIAT 652).